Consider the following 127-residue polypeptide: uncharacterized protein (127 aa).

2 helical membrane-spanning segments follow: residues 13 to 35 and 57 to 81; these read ILLLISIFFLVCIISLVGIGIIF and AVLIVLGVFAICFMIIQLVISIMIW.

The protein resides in the cell membrane. This is an uncharacterized protein from Mycoplasma genitalium (strain ATCC 33530 / DSM 19775 / NCTC 10195 / G37) (Mycoplasmoides genitalium).